Reading from the N-terminus, the 292-residue chain is Pyridoxal 5'-phosphate synthase subunit PdxS (292 aa).

D22 is a D-ribose 5-phosphate binding site. K79 serves as the catalytic Schiff-base intermediate with D-ribose 5-phosphate. G151 contacts D-ribose 5-phosphate. R163 lines the D-glyceraldehyde 3-phosphate pocket. Residues G212 and 233 to 234 (GS) each bind D-ribose 5-phosphate.

Belongs to the PdxS/SNZ family. In the presence of PdxT, forms a dodecamer of heterodimers.

The enzyme catalyses aldehydo-D-ribose 5-phosphate + D-glyceraldehyde 3-phosphate + L-glutamine = pyridoxal 5'-phosphate + L-glutamate + phosphate + 3 H2O + H(+). Its pathway is cofactor biosynthesis; pyridoxal 5'-phosphate biosynthesis. Its function is as follows. Catalyzes the formation of pyridoxal 5'-phosphate from ribose 5-phosphate (RBP), glyceraldehyde 3-phosphate (G3P) and ammonia. The ammonia is provided by the PdxT subunit. Can also use ribulose 5-phosphate and dihydroxyacetone phosphate as substrates, resulting from enzyme-catalyzed isomerization of RBP and G3P, respectively. The protein is Pyridoxal 5'-phosphate synthase subunit PdxS of Ruminiclostridium cellulolyticum (strain ATCC 35319 / DSM 5812 / JCM 6584 / H10) (Clostridium cellulolyticum).